Here is a 315-residue protein sequence, read N- to C-terminus: MLVKKISPRGYCYGVVDAMKLAQQAALNDNLPRPIHILGMIVHNAHVTREFERMGVLTVDGPDRLEALETIKEGTVIFTAHGISPAVYARAAEKKLTVVDATCPDVTRTHDLIRSVVADDYEVIYVGKHGHPEPEGAVGVAPEHVHLIEKVEDIEALPAHLADKKIIVTNQTTMSQWDVQALMEHVRKKYPHVEVHNEICNATQVRQEAVAEQAGDCDLVIVVGDPRSNNSNRLAQVSFDIAATPAHRIGDLTELDLSWLDGVNQVGVTSGASTPTPITKKVIDFLQQYDPADISTHDKTPFLELRRILPKVKIL.

Cys-12 contributes to the [4Fe-4S] cluster binding site. His-43 and His-81 together coordinate (2E)-4-hydroxy-3-methylbut-2-enyl diphosphate. 2 residues coordinate dimethylallyl diphosphate: His-43 and His-81. Isopentenyl diphosphate contacts are provided by His-43 and His-81. A [4Fe-4S] cluster-binding site is contributed by Cys-103. A (2E)-4-hydroxy-3-methylbut-2-enyl diphosphate-binding site is contributed by His-131. His-131 provides a ligand contact to dimethylallyl diphosphate. Residue His-131 participates in isopentenyl diphosphate binding. Residue Glu-133 is the Proton donor of the active site. Thr-172 is a binding site for (2E)-4-hydroxy-3-methylbut-2-enyl diphosphate. Cys-200 contacts [4Fe-4S] cluster. The (2E)-4-hydroxy-3-methylbut-2-enyl diphosphate site is built by Ser-228, Asn-230, and Ser-273. Ser-228, Asn-230, and Ser-273 together coordinate dimethylallyl diphosphate. Residues Ser-228, Asn-230, and Ser-273 each contribute to the isopentenyl diphosphate site.

Belongs to the IspH family. [4Fe-4S] cluster is required as a cofactor.

The catalysed reaction is isopentenyl diphosphate + 2 oxidized [2Fe-2S]-[ferredoxin] + H2O = (2E)-4-hydroxy-3-methylbut-2-enyl diphosphate + 2 reduced [2Fe-2S]-[ferredoxin] + 2 H(+). It catalyses the reaction dimethylallyl diphosphate + 2 oxidized [2Fe-2S]-[ferredoxin] + H2O = (2E)-4-hydroxy-3-methylbut-2-enyl diphosphate + 2 reduced [2Fe-2S]-[ferredoxin] + 2 H(+). It participates in isoprenoid biosynthesis; dimethylallyl diphosphate biosynthesis; dimethylallyl diphosphate from (2E)-4-hydroxy-3-methylbutenyl diphosphate: step 1/1. The protein operates within isoprenoid biosynthesis; isopentenyl diphosphate biosynthesis via DXP pathway; isopentenyl diphosphate from 1-deoxy-D-xylulose 5-phosphate: step 6/6. Functionally, catalyzes the conversion of 1-hydroxy-2-methyl-2-(E)-butenyl 4-diphosphate (HMBPP) into a mixture of isopentenyl diphosphate (IPP) and dimethylallyl diphosphate (DMAPP). Acts in the terminal step of the DOXP/MEP pathway for isoprenoid precursor biosynthesis. In Exiguobacterium sibiricum (strain DSM 17290 / CCUG 55495 / CIP 109462 / JCM 13490 / 255-15), this protein is 4-hydroxy-3-methylbut-2-enyl diphosphate reductase.